A 263-amino-acid polypeptide reads, in one-letter code: Translation initiation factor 2 subunit alpha (263 aa).

Positions 12–83 (GEILIATVKQ…RKGTIDVSLK (72 aa)) constitute an S1 motif domain.

Belongs to the eIF-2-alpha family. Heterotrimer composed of an alpha, a beta and a gamma chain.

Functionally, eIF-2 functions in the early steps of protein synthesis by forming a ternary complex with GTP and initiator tRNA. The chain is Translation initiation factor 2 subunit alpha from Sulfurisphaera tokodaii (strain DSM 16993 / JCM 10545 / NBRC 100140 / 7) (Sulfolobus tokodaii).